A 446-amino-acid polypeptide reads, in one-letter code: Protein IQ-DOMAIN 19 (446 aa).

Positions 93–140 are disordered; it reads IPGTPKEKRRWSFRRSSATGPPPPACAITLKDSPPPPPPPPPPPPLQQ. Over residues 125–139 the composition is skewed to pro residues; it reads SPPPPPPPPPPPPLQ. IQ domains are found at residues 163-191 and 192-214; these read EEFAAIKIQACYRSHLARKALRALKGLVK and LQALVRGHLVRKQATATLRCMQA. The tract at residues 214 to 231 is calmodulin-binding; sequence ALITLQAKAREQRIRMIG. Low complexity predominate over residues 332–345; that stretch reads QSSKAKARSQSAPK. Positions 332-398 are disordered; that stretch reads QSSKAKARSQ…TAKESQQHHH (67 aa). Over residues 379–392 the composition is skewed to polar residues; sequence QRSSSQLGSNTAKE.

The protein belongs to the IQD family. Binds to multiple calmodulin (CaM) in the presence of Ca(2+) and CaM-like proteins.

It localises to the cytoplasm. The protein localises to the cytoskeleton. It is found in the cell membrane. In terms of biological role, may be involved in cooperative interactions with calmodulins or calmodulin-like proteins. Recruits calmodulin proteins to microtubules, thus being a potential scaffold in cellular signaling and trafficking. Acts as a positive regulator of trichome branch initiation. May associate with nucleic acids and regulate gene expression at the transcriptional or post-transcriptional level. The chain is Protein IQ-DOMAIN 19 from Arabidopsis thaliana (Mouse-ear cress).